The following is a 170-amino-acid chain: Peptide deformylase (170 aa).

Positions 91 and 133 each coordinate Fe cation. The active site involves glutamate 134. Histidine 137 is a Fe cation binding site.

The protein belongs to the polypeptide deformylase family. The cofactor is Fe(2+).

It carries out the reaction N-terminal N-formyl-L-methionyl-[peptide] + H2O = N-terminal L-methionyl-[peptide] + formate. Its function is as follows. Removes the formyl group from the N-terminal Met of newly synthesized proteins. Requires at least a dipeptide for an efficient rate of reaction. N-terminal L-methionine is a prerequisite for activity but the enzyme has broad specificity at other positions. The sequence is that of Peptide deformylase from Histophilus somni (strain 2336) (Haemophilus somnus).